The sequence spans 151 residues: Cytochrome c-type biogenesis protein CcmE (151 aa).

Over Met1–Arg9 the chain is Cytoplasmic. Residues Ile10–Ala30 traverse the membrane as a helical; Signal-anchor for type II membrane protein segment. The Periplasmic portion of the chain corresponds to Met31–Gly151. Residues His123 and Tyr127 each coordinate heme.

It belongs to the CcmE/CycJ family.

The protein resides in the cell inner membrane. Functionally, heme chaperone required for the biogenesis of c-type cytochromes. Transiently binds heme delivered by CcmC and transfers the heme to apo-cytochromes in a process facilitated by CcmF and CcmH. The sequence is that of Cytochrome c-type biogenesis protein CcmE from Cereibacter sphaeroides (strain ATCC 17025 / ATH 2.4.3) (Rhodobacter sphaeroides).